Here is a 103-residue protein sequence, read N- to C-terminus: Small ribosomal subunit protein uS10 (103 aa).

This sequence belongs to the universal ribosomal protein uS10 family. Part of the 30S ribosomal subunit.

Functionally, involved in the binding of tRNA to the ribosomes. This chain is Small ribosomal subunit protein uS10, found in Leptothrix cholodnii (strain ATCC 51168 / LMG 8142 / SP-6) (Leptothrix discophora (strain SP-6)).